Reading from the N-terminus, the 422-residue chain is L-threonine dehydratase biosynthetic IlvA (422 aa).

The residue at position 60 (lysine 60) is an N6-(pyridoxal phosphate)lysine. Pyridoxal 5'-phosphate contacts are provided by residues asparagine 87, glycine 190 to leucine 194, and serine 315. An ACT-like domain is found at histidine 339–lysine 413.

Belongs to the serine/threonine dehydratase family. In terms of assembly, homotetramer. It depends on pyridoxal 5'-phosphate as a cofactor.

It carries out the reaction L-threonine = 2-oxobutanoate + NH4(+). It functions in the pathway amino-acid biosynthesis; L-isoleucine biosynthesis; 2-oxobutanoate from L-threonine: step 1/1. Its function is as follows. Catalyzes the anaerobic formation of alpha-ketobutyrate and ammonia from threonine in a two-step reaction. The first step involved a dehydration of threonine and a production of enamine intermediates (aminocrotonate), which tautomerizes to its imine form (iminobutyrate). Both intermediates are unstable and short-lived. The second step is the nonenzymatic hydrolysis of the enamine/imine intermediates to form 2-ketobutyrate and free ammonia. In the low water environment of the cell, the second step is accelerated by RidA. The sequence is that of L-threonine dehydratase biosynthetic IlvA (ilvA) from Bacillus subtilis (strain 168).